Consider the following 88-residue polypeptide: Fe-S protein maturation auxiliary factor SufT (88 aa).

This sequence belongs to the MIP18 family.

Functionally, involved in the maturation of iron-sulfur (Fe-S) proteins. May function as a Fe-S cluster carrier. Is required for S.aureus growth under conditions that impose a high demand for lipoic acid, likely via a role in the maturation of the lipoate synthase LipA. Is non-essential for growth in conditions that impose a low demand for lipoic acid or Fe-S clusters, such as fermentative growth. Also seems to be involved in the maturation of AcnA, LeuCD and IlvD proteins, that utilize Fe-S cluster cofactors, and its role increases under conditions of high-demand for Fe-S clusters (respiratory growth). Is not involved in the repair of Fe-S clusters damaged by reactive oxygen species or in the physical protection of Fe-S clusters from oxidants. Displays synergy with the Fe-S cluster carrier Nfu. This is Fe-S protein maturation auxiliary factor SufT from Staphylococcus aureus (strain USA300).